The sequence spans 566 residues: E3 ubiquitin-protein ligase RNF220 (566 aa).

K277 participates in a covalent cross-link: Glycyl lysine isopeptide (Lys-Gly) (interchain with G-Cter in SUMO2). Positions 277–297 (KREGESPTASPHSSATDDLHH) are disordered. Position 390 is a phosphoserine (S390). Residues 485-513 (EDSAVTTFEALKARVRELERQLSRGDRYK) adopt a coiled-coil conformation. The interval 514–522 (CLICMDSYS) is required for targeting to the cytoplasm. The RING-type zinc finger occupies 514–553 (CLICMDSYSMPLTSIQCWHVHCEECWLRTLGAKKLCPQCY).

As to quaternary structure, interacts with SIN3B. Interacts with CTNNB1 (via Armadillo repeats 2-8). Interacts with USP7 (via MATH domain). In terms of processing, auto-ubiquitinated; leads to proteasomal degradation.

Its subcellular location is the cytoplasm. It catalyses the reaction S-ubiquitinyl-[E2 ubiquitin-conjugating enzyme]-L-cysteine + [acceptor protein]-L-lysine = [E2 ubiquitin-conjugating enzyme]-L-cysteine + N(6)-ubiquitinyl-[acceptor protein]-L-lysine.. It functions in the pathway protein modification; protein ubiquitination. Functionally, E3 ubiquitin-protein ligase that promotes the ubiquitination and proteasomal degradation of SIN3B. Independently of its E3 ligase activity, acts as a CTNNB1 stabilizer through USP7-mediated deubiquitination of CTNNB1 promoting Wnt signaling. This chain is E3 ubiquitin-protein ligase RNF220 (RNF220), found in Bos taurus (Bovine).